We begin with the raw amino-acid sequence, 155 residues long: Transcriptional repressor NrdR (155 aa).

The segment at 1 to 24 (MRCPYCGHEDSQVKDSRPTEDGAA) is disordered. A zinc finger lies at 3 to 34 (CPYCGHEDSQVKDSRPTEDGAAIRRRRQCEDC). Basic and acidic residues predominate over residues 7-24 (GHEDSQVKDSRPTEDGAA). One can recognise an ATP-cone domain in the interval 49–139 (VVVIKAGGTR…VYRDFTEARD (91 aa)).

Belongs to the NrdR family. The cofactor is Zn(2+).

Functionally, negatively regulates transcription of bacterial ribonucleotide reductase nrd genes and operons by binding to NrdR-boxes. This chain is Transcriptional repressor NrdR, found in Sphingopyxis alaskensis (strain DSM 13593 / LMG 18877 / RB2256) (Sphingomonas alaskensis).